The sequence spans 100 residues: Large ribosomal subunit protein uL23 (100 aa).

This sequence belongs to the universal ribosomal protein uL23 family. Part of the 50S ribosomal subunit. Contacts protein L29, and trigger factor when it is bound to the ribosome.

One of the early assembly proteins it binds 23S rRNA. One of the proteins that surrounds the polypeptide exit tunnel on the outside of the ribosome. Forms the main docking site for trigger factor binding to the ribosome. The polypeptide is Large ribosomal subunit protein uL23 (Prochlorococcus marinus (strain MIT 9515)).